A 505-amino-acid chain; its full sequence is Putative ribose/galactose/methyl galactoside import ATP-binding protein 1 (505 aa).

2 consecutive ABC transporter domains span residues Leu10 to Ser245 and Arg256 to Gly501. Gly42 to Ser49 contacts ATP.

The protein belongs to the ABC transporter superfamily. Carbohydrate importer 2 (CUT2) (TC 3.A.1.2) family.

Its subcellular location is the cell inner membrane. The enzyme catalyses D-ribose(out) + ATP + H2O = D-ribose(in) + ADP + phosphate + H(+). It carries out the reaction D-galactose(out) + ATP + H2O = D-galactose(in) + ADP + phosphate + H(+). In terms of biological role, part of an ABC transporter complex involved in carbohydrate import. Could be involved in ribose, galactose and/or methyl galactoside import. Responsible for energy coupling to the transport system. In Agrobacterium fabrum (strain C58 / ATCC 33970) (Agrobacterium tumefaciens (strain C58)), this protein is Putative ribose/galactose/methyl galactoside import ATP-binding protein 1.